A 335-amino-acid polypeptide reads, in one-letter code: Glyceraldehyde-3-phosphate dehydrogenase (335 aa).

Residues 12-13 (RI), aspartate 34, and arginine 79 contribute to the NAD(+) site. Residues 150 to 152 (SCT), threonine 181, 210 to 211 (TG), and arginine 233 contribute to the D-glyceraldehyde 3-phosphate site. Catalysis depends on cysteine 151, which acts as the Nucleophile. Asparagine 315 contributes to the NAD(+) binding site.

The protein belongs to the glyceraldehyde-3-phosphate dehydrogenase family. Homotetramer.

The protein resides in the cytoplasm. The enzyme catalyses D-glyceraldehyde 3-phosphate + phosphate + NAD(+) = (2R)-3-phospho-glyceroyl phosphate + NADH + H(+). Its pathway is carbohydrate degradation; glycolysis; pyruvate from D-glyceraldehyde 3-phosphate: step 1/5. The polypeptide is Glyceraldehyde-3-phosphate dehydrogenase (GPD) (Ogataea parapolymorpha (strain ATCC 26012 / BCRC 20466 / JCM 22074 / NRRL Y-7560 / DL-1) (Yeast)).